The primary structure comprises 512 residues: Aldehyde dehydrogenase B (512 aa).

Catalysis depends on residues glutamate 268 and cysteine 307.

In terms of assembly, homotetramer.

The enzyme catalyses an aldehyde + NADP(+) + H2O = a carboxylate + NADPH + 2 H(+). It catalyses the reaction acetaldehyde + NADP(+) + H2O = acetate + NADPH + 2 H(+). The catalysed reaction is chloroacetaldehyde + NADP(+) + H2O = chloroacetate + NADPH + 2 H(+). It carries out the reaction propanal + NADP(+) + H2O = propanoate + NADPH + 2 H(+). Magnesium increases enzyme activity with various substrates. Functionally, catalyzes the NADP(+)-dependent oxidation of diverse aldehydes to their corresponding carboxylic acids, with a preference for acetaldehyde and chloroacetaldehyde. May play a role in detoxifying aldehydes present during stationary phase. Cannot use NAD(+) instead of NADP(+) as the electron acceptor. To a lesser extent is also able to oxidize propionaldehyde (propanal), benzaldehyde, mafosfamide, and 4-hydroperoxycyclophosphamide. Does not use either glyceraldehyde or glycolaldehyde as substrates. In Escherichia coli (strain K12), this protein is Aldehyde dehydrogenase B.